Here is a 145-residue protein sequence, read N- to C-terminus: Putative sterol 14-demethylase-like protein (145 aa).

Residues 5 to 25 (YYTLLKTSVAIIIVFVVAKLI) traverse the membrane as a helical segment.

This sequence belongs to the cytochrome P450 family. As to expression, expressed specifically in roots.

The protein localises to the membrane. The sequence is that of Putative sterol 14-demethylase-like protein (CYP51G2) from Arabidopsis thaliana (Mouse-ear cress).